A 291-amino-acid chain; its full sequence is Nucleotide-binding protein lmo2474 (291 aa).

13 to 20 provides a ligand contact to ATP; the sequence is GMSGAGKT. 63–66 is a binding site for GTP; the sequence is DLRG.

This sequence belongs to the RapZ-like family.

Its function is as follows. Displays ATPase and GTPase activities. This chain is Nucleotide-binding protein lmo2474, found in Listeria monocytogenes serovar 1/2a (strain ATCC BAA-679 / EGD-e).